We begin with the raw amino-acid sequence, 470 residues long: uncharacterized protein (470 aa).

The HTH gntR-type domain occupies 1 to 69 (MTRYQHLATL…PRSGYFVAQR (69 aa)). K313 carries the N6-(pyridoxal phosphate)lysine modification.

The protein in the C-terminal section; belongs to the class-I pyridoxal-phosphate-dependent aminotransferase family.

This is an uncharacterized protein from Escherichia coli (strain K12).